A 315-amino-acid polypeptide reads, in one-letter code: Acetyl-coenzyme A carboxylase carboxyl transferase subunit alpha (315 aa).

Positions leucine 36–isoleucine 289 constitute a CoA carboxyltransferase C-terminal domain.

Belongs to the AccA family. Acetyl-CoA carboxylase is a heterohexamer composed of biotin carboxyl carrier protein (AccB), biotin carboxylase (AccC) and two subunits each of ACCase subunit alpha (AccA) and ACCase subunit beta (AccD).

The protein localises to the cytoplasm. It carries out the reaction N(6)-carboxybiotinyl-L-lysyl-[protein] + acetyl-CoA = N(6)-biotinyl-L-lysyl-[protein] + malonyl-CoA. It participates in lipid metabolism; malonyl-CoA biosynthesis; malonyl-CoA from acetyl-CoA: step 1/1. In terms of biological role, component of the acetyl coenzyme A carboxylase (ACC) complex. First, biotin carboxylase catalyzes the carboxylation of biotin on its carrier protein (BCCP) and then the CO(2) group is transferred by the carboxyltransferase to acetyl-CoA to form malonyl-CoA. The chain is Acetyl-coenzyme A carboxylase carboxyl transferase subunit alpha from Francisella tularensis subsp. holarctica (strain FTNF002-00 / FTA).